The chain runs to 169 residues: Vimentin-type intermediate filament-associated coiled-coil protein (169 aa).

Residues 7-89 are a coiled coil; that stretch reads LQIREANAHL…VHSLQATVHQ (83 aa). Over residues 126-135 the composition is skewed to low complexity; the sequence is RLGPLPASDP. The segment at 126–169 is disordered; the sequence is RLGPLPASDPGHPPPGGPGPPLDNSTGEEADRDHLQPAVFGTTV. A compositionally biased stretch (pro residues) spans 136-146; sequence GHPPPGGPGPP.

The protein localises to the cytoplasm. This chain is Vimentin-type intermediate filament-associated coiled-coil protein (VMAC), found in Homo sapiens (Human).